Reading from the N-terminus, the 85-residue chain is Large ribosomal subunit protein bL27 (85 aa).

The segment covering 1–11 (MASKASGGSTR) has biased composition (polar residues). The interval 1 to 20 (MASKASGGSTRNGRDSISKR) is disordered.

The protein belongs to the bacterial ribosomal protein bL27 family.

The protein is Large ribosomal subunit protein bL27 of Sulfurihydrogenibium sp. (strain YO3AOP1).